The primary structure comprises 305 residues: Methionyl-tRNA formyltransferase (305 aa).

111–114 is a (6S)-5,6,7,8-tetrahydrofolate binding site; the sequence is SLLP.

This sequence belongs to the Fmt family.

It catalyses the reaction L-methionyl-tRNA(fMet) + (6R)-10-formyltetrahydrofolate = N-formyl-L-methionyl-tRNA(fMet) + (6S)-5,6,7,8-tetrahydrofolate + H(+). Attaches a formyl group to the free amino group of methionyl-tRNA(fMet). The formyl group appears to play a dual role in the initiator identity of N-formylmethionyl-tRNA by promoting its recognition by IF2 and preventing the misappropriation of this tRNA by the elongation apparatus. This Helicobacter acinonychis (strain Sheeba) protein is Methionyl-tRNA formyltransferase.